The sequence spans 483 residues: Probable cytosol aminopeptidase (483 aa).

Mn(2+) contacts are provided by lysine 245 and aspartate 250. Residue lysine 257 is part of the active site. The Mn(2+) site is built by aspartate 268, aspartate 327, and glutamate 329. The active site involves arginine 331.

The protein belongs to the peptidase M17 family. Mn(2+) serves as cofactor.

Its subcellular location is the cytoplasm. The catalysed reaction is Release of an N-terminal amino acid, Xaa-|-Yaa-, in which Xaa is preferably Leu, but may be other amino acids including Pro although not Arg or Lys, and Yaa may be Pro. Amino acid amides and methyl esters are also readily hydrolyzed, but rates on arylamides are exceedingly low.. It catalyses the reaction Release of an N-terminal amino acid, preferentially leucine, but not glutamic or aspartic acids.. Its function is as follows. Presumably involved in the processing and regular turnover of intracellular proteins. Catalyzes the removal of unsubstituted N-terminal amino acids from various peptides. This is Probable cytosol aminopeptidase from Wolinella succinogenes (strain ATCC 29543 / DSM 1740 / CCUG 13145 / JCM 31913 / LMG 7466 / NCTC 11488 / FDC 602W) (Vibrio succinogenes).